The following is a 602-amino-acid chain: MLHFTAATSRFRLGRERANSVRSDGGWGVLQPVSATFNPPLRGWQRRALVQYLGTQPRDFLAVATPGSGKTSFALRIAAELLRYHTVEQVTVVVPTEHLKVQWAHAAAAHGLSLDPKFANSNPQTSPEYHGVMVTYAQVASHPTLHRVRTEARKTLVVFDEIHHGGDAKTWGDAIREAFGDATRRLALTGTPFRSDDSPIPFVSYQPDADGVLRSQADHTYGYAEALADGVVRPVVFLAYSGQARWRDSAGEEYEARLGEPLSAEQTARAWRTALDPEGEWMPAVITAADRRLRQLRAHVPDAGGMIIASDRTTARAYARLLTTMTAEEPTVVLSDDPGSSARITEFAQGTSRWLVAVRMVSEGVDVPRLSVGVYATNASTPLFFAQAIGRFVRSRRPGETASIFVPSVPNLLQLASALEVQRNHVLGRPHRESAHDPLDGDPATRTQTERGGAERGFTALGADAELDQVIFDGSSFGTATPTGSDEEADYLGIPGLLDAEQMRALLHRRQDEQLRKRAQLQKGATQPATSGASASVHGQLRDLRRELHTLVSIAHHRTGKPHGWIHDERRRRCGGPPIAAATRAQIKARIDALRQLNSERS.

In terms of domain architecture, Helicase ATP-binding spans 51–210; the sequence is QYLGTQPRDF…PFVSYQPDAD (160 aa). Basic and acidic residues predominate over residues 430–439; the sequence is PHRESAHDPL. 2 disordered regions span residues 430-452 and 518-538; these read PHRE…TERG and RAQL…ASVH. The segment covering 523 to 534 has biased composition (polar residues); sequence KGATQPATSGAS.

To M.leprae ML1624.

This is an uncharacterized protein from Mycobacterium tuberculosis (strain ATCC 25618 / H37Rv).